A 245-amino-acid chain; its full sequence is Uridylate kinase (245 aa).

12-15 (KISG) contacts ATP. Glycine 55 contributes to the UMP binding site. ATP contacts are provided by glycine 56 and arginine 60. UMP is bound by residues aspartate 76 and 137–144 (AGAPYLTT). ATP-binding residues include threonine 164, tyrosine 171, and aspartate 174.

This sequence belongs to the UMP kinase family. As to quaternary structure, homohexamer.

It localises to the cytoplasm. It carries out the reaction UMP + ATP = UDP + ADP. It participates in pyrimidine metabolism; CTP biosynthesis via de novo pathway; UDP from UMP (UMPK route): step 1/1. Inhibited by UTP. In terms of biological role, catalyzes the reversible phosphorylation of UMP to UDP. This chain is Uridylate kinase, found in Chlamydia trachomatis serovar A (strain ATCC VR-571B / DSM 19440 / HAR-13).